Consider the following 250-residue polypeptide: Large ribosomal subunit protein uL13c (250 aa).

The N-terminal 47 residues, 1 to 47 (MATMACASSLTFPSAQTQKSFFGTNVKQTPVLSFPRPTVAAAVAVSA), are a transit peptide targeting the chloroplast.

In terms of assembly, component of the chloroplast large ribosomal subunit (LSU). Mature 70S chloroplast ribosomes of higher plants consist of a small (30S) and a large (50S) subunit. The 30S small subunit contains 1 molecule of ribosomal RNA (16S rRNA) and 24 different proteins. The 50S large subunit contains 3 rRNA molecules (23S, 5S and 4.5S rRNA) and 33 different proteins.

It is found in the plastid. The protein localises to the chloroplast. Functionally, component of the chloroplast ribosome (chloro-ribosome), a dedicated translation machinery responsible for the synthesis of chloroplast genome-encoded proteins, including proteins of the transcription and translation machinery and components of the photosynthetic apparatus. The protein is Large ribosomal subunit protein uL13c (RPL13) of Spinacia oleracea (Spinach).